The sequence spans 233 residues: Movement and silencing protein TGBp1 (233 aa).

Residues 1–134 (MDCKYLLELL…ALLNGIFGCQ (134 aa)) enclose the (+)RNA virus helicase ATP-binding domain. One can recognise a (+)RNA virus helicase C-terminal domain in the interval 135 to 233 (IKSRREDLCH…EFDAWSHATC (99 aa)).

It belongs to the Tymovirales TGBp1 protein family. In terms of assembly, homodimer and homooligomer. Interacts with capsid protein. Interacts with host AGO1; this interaction targets the host protein for degradation, thereby suppressing the antiviral RNA silencing.

The protein resides in the host cytoplasm. Transports viral genome to neighboring plant cells directly through plasmosdesmata, without any budding. The movement protein allows efficient cell to cell propagation, by bypassing the host cell wall barrier. Increases plasmodesma size exclusion limit. Acts as a suppressor of RNA-mediated gene silencing, also known as post-transcriptional gene silencing (PTGS), a mechanism of plant viral defense that limits the accumulation of viral RNAs. The chain is Movement and silencing protein TGBp1 from Narcissus mosaic virus (NMV).